Here is a 391-residue protein sequence, read N- to C-terminus: 3-ketoacyl-CoA thiolase (391 aa).

Cys95 functions as the Acyl-thioester intermediate in the catalytic mechanism. Catalysis depends on proton acceptor residues His347 and Cys377.

This sequence belongs to the thiolase-like superfamily. Thiolase family. As to quaternary structure, heterotetramer of two alpha chains (FadB) and two beta chains (FadA).

The protein localises to the cytoplasm. The enzyme catalyses an acyl-CoA + acetyl-CoA = a 3-oxoacyl-CoA + CoA. The protein operates within lipid metabolism; fatty acid beta-oxidation. Functionally, catalyzes the final step of fatty acid oxidation in which acetyl-CoA is released and the CoA ester of a fatty acid two carbons shorter is formed. This Pseudomonas fluorescens (strain Pf0-1) protein is 3-ketoacyl-CoA thiolase.